We begin with the raw amino-acid sequence, 351 residues long: MALPFQKELEKYKNIDEDELLGKLSEEELKQLENVLDDLDPESAMLPAGFRQKDQTQKAATGPFDREHLLMYLEKEALEQKDREDFVPFTGEKKGRVFIPKEKPIETRKEEKVTLDPELEEALASASDTELYDLAAVLGVHNLLNNPKFDEETANNKGGKGPVRNVVKGEKVKPVFEEPPNPTNVEISLQQMKANDPSLQEVNLNNIKNIPIPTLREFAKALETNTHVKKFSLAATRSNDPVAIAFADMLKVNKTLTSLNIESNFITGTGILALVEALKENDTLTEIKIDNQRQQLGTAVEMEIAQMLEENSRILKFGYQFTKQGPRTRVAAAITKNNDLVRKKRVEADRR.

Ser-25 bears the Phosphoserine mark.

This sequence belongs to the tropomodulin family. In terms of assembly, binds to the N-terminus of tropomyosin and to actin. As to expression, neuronal-tissue specific.

The protein localises to the cytoplasm. It localises to the cytoskeleton. Blocks the elongation and depolymerization of the actin filaments at the pointed end. The Tmod/TM complex contributes to the formation of the short actin protofilament, which in turn defines the geometry of the membrane skeleton. The sequence is that of Tropomodulin-2 (TMOD2) from Homo sapiens (Human).